The following is a 294-amino-acid chain: Decaprenyl-diphosphate synthase subunit 2 (294 aa).

It belongs to the FPP/GGPP synthase family. Heterotetramer of 2 dps1 and 2 dlp1 subunits.

It is found in the mitochondrion. It catalyses the reaction 7 isopentenyl diphosphate + (2E,6E)-farnesyl diphosphate = all-trans-decaprenyl diphosphate + 7 diphosphate. The protein operates within cofactor biosynthesis; ubiquinone biosynthesis. Functionally, supplies decaprenyl diphosphate, the precursor for the side chain of the isoprenoid quinones ubiquinone-10. In Schizosaccharomyces pombe (strain 972 / ATCC 24843) (Fission yeast), this protein is Decaprenyl-diphosphate synthase subunit 2 (dlp1).